We begin with the raw amino-acid sequence, 788 residues long: Integrin beta-6 (788 aa).

Positions 1-21 (MGIELLCFFFLFLGRDDHVRG) are cleaved as a signal peptide. The PSI domain maps to 22–71 (GCAMEGAETCGDCLLIGPQCAWCSQENFTHPSGVSERCDTPANLLAKGCQ). At 22–709 (GCAMEGAETC…KDCPKPPNIP (688 aa)) the chain is on the extracellular side. 19 disulfides stabilise this stretch: cysteine 23-cysteine 41, cysteine 31-cysteine 454, cysteine 34-cysteine 59, cysteine 44-cysteine 70, cysteine 197-cysteine 204, cysteine 252-cysteine 293, cysteine 394-cysteine 406, cysteine 426-cysteine 452, cysteine 456-cysteine 476, cysteine 467-cysteine 479, cysteine 481-cysteine 490, cysteine 492-cysteine 519, cysteine 502-cysteine 517, cysteine 511-cysteine 522, cysteine 524-cysteine 537, cysteine 539-cysteine 560, cysteine 544-cysteine 558, cysteine 552-cysteine 563, and cysteine 565-cysteine 574. N-linked (GlcNAc...) asparagine glycans are attached at residues asparagine 48 and asparagine 97. One can recognise a VWFA domain in the interval 131–371 (YPVDLYYLMD…QLIISAYEEL (241 aa)). Positions 140, 142, and 144 each coordinate Mg(2+). Ca(2+)-binding residues include serine 144, aspartate 147, aspartate 148, and glutamate 179. The Ca(2+) site is built by asparagine 235, aspartate 237, proline 239, and glutamate 240. Glutamate 240 lines the Mg(2+) pocket. N-linked (GlcNAc...) asparagine glycosylation occurs at asparagine 260. 2 residues coordinate Ca(2+): aspartate 271 and lysine 355. 3 N-linked (GlcNAc...) asparagine glycosylation sites follow: asparagine 387, asparagine 396, and asparagine 418. 4 I-EGF domains span residues 456–491 (CQKE…PHCE), 492–538 (CGED…PYCQ), 539–575 (CDNF…EYCN), and 576–615 (CTTS…PTCE). N-linked (GlcNAc...) asparagine glycans are attached at residues asparagine 463 and asparagine 471. Asparagine 541 carries N-linked (GlcNAc...) asparagine glycosylation. N-linked (GlcNAc...) asparagine glycosylation is present at asparagine 575. 9 cysteine pairs are disulfide-bonded: cysteine 576-cysteine 599, cysteine 583-cysteine 597, cysteine 591-cysteine 602, cysteine 604-cysteine 614, cysteine 617-cysteine 620, cysteine 624-cysteine 670, cysteine 630-cysteine 649, cysteine 633-cysteine 645, and cysteine 678-cysteine 702. Asparagine 696 carries an N-linked (GlcNAc...) asparagine glycan. Residues 710-730 (MIMLGVSLAILLIGVVLLCIW) traverse the membrane as a helical segment. Residues 731 to 758 (KLLVSFHDRKEVAKFEAERSKAKWQTGT) form an interaction with HAX1 region. The Cytoplasmic portion of the chain corresponds to 731–788 (KLLVSFHDRKEVAKFEAERSKAKWQTGTNPLYRGSTSTFKNVTYKHRDKLKTDLSTDG).

The protein belongs to the integrin beta chain family. In terms of assembly, heterodimer of an alpha and a beta subunit. Interacts with FLNB. Interacts with HAX1. ITGAV:ITGB6 interacts with FBN1. ITGAV:ITGB6 interacts with TGFB1.

It is found in the cell membrane. The protein resides in the cell junction. It localises to the focal adhesion. Functionally, integrin alpha-V:beta-6 (ITGAV:ITGB6) is a receptor for fibronectin and cytotactin. It recognizes the sequence R-G-D in its ligands. ITGAV:ITGB6 acts as a receptor for fibrillin-1 (FBN1) and mediates R-G-D-dependent cell adhesion to FBN1. Integrin alpha-V:beta-6 (ITGAV:ITGB6) mediates R-G-D-dependent release of transforming growth factor beta-1 (TGF-beta-1) from regulatory Latency-associated peptide (LAP), thereby playing a key role in TGF-beta-1 activation. The polypeptide is Integrin beta-6 (ITGB6) (Cavia porcellus (Guinea pig)).